The chain runs to 201 residues: Cytochrome c oxidase subunit 3 (201 aa).

4 helical membrane passes run valine 25 to alanine 45, leucine 65 to glycine 85, tryptophan 100 to leucine 120, and valine 137 to isoleucine 157.

This sequence belongs to the cytochrome c oxidase subunit 3 family.

The protein resides in the cell membrane. It carries out the reaction 4 Fe(II)-[cytochrome c] + O2 + 8 H(+)(in) = 4 Fe(III)-[cytochrome c] + 2 H2O + 4 H(+)(out). The chain is Cytochrome c oxidase subunit 3 (ctaE) from Thermostichus vulcanus (Synechococcus vulcanus).